The following is a 20-amino-acid chain: Dihydroorotase-like protein (20 aa).

This sequence belongs to the metallo-dependent hydrolases superfamily. DHOase family. PyrC' subfamily. As to quaternary structure, heterododecamer of 6 active PyrB subunits and 6 non-catalytic PyrC' subunits.

Non-functional DHOase. This Pseudomonas fluorescens biotype A protein is Dihydroorotase-like protein (pyrC').